Reading from the N-terminus, the 743-residue chain is Tudor domain-containing protein 3 (743 aa).

Residues 241–262 (KTFGGGGGGARSNLNIGAAGHR) are disordered. The region spanning 286–326 (LVDEKALKHITEMGFSKEASRQALMDNANNLEAALNVLLNS) is the UBA domain. 2 disordered regions span residues 327–365 (SKQKPAVGPPARGRGKGRGRGRSEDEEDLGTARPSAPST) and 380–549 (EEPK…CYER). Position 349 is a phosphoserine (S349). Positions 414–431 (PRNDTRQPRNERPPRFQK) are enriched in basic and acidic residues. The span at 432 to 445 (DTPTSKSTVENSVL) shows a compositional bias: polar residues. S438 is subject to Phosphoserine. Basic and acidic residues-rich tracts occupy residues 464–484 (AEERIKCDRPYSRYDRTKDAS) and 536–549 (RENQTGHPDHCYER). Residue K563 forms a Glycyl lysine isopeptide (Lys-Gly) (interchain with G-Cter in SUMO2) linkage. Residues 572 to 603 (TDYPRPVQSNSLGVPNGETAPPLKGRRVGPIK) form a disordered region. Residues 647–707 (VWKPGDECFA…KPVQTEAWEE (61 aa)) enclose the Tudor domain. Positions 711 to 725 (YDHTIEFRRGGDGQP) are enriched in basic and acidic residues. Residues 711–743 (YDHTIEFRRGGDGQPRRSTRPTQQFYQPPRARN) form a disordered region. Positions 723-743 (GQPRRSTRPTQQFYQPPRARN) are EBM motif; may mediate interaction with the EJC.

In terms of assembly, component of mRNA stress granules. Interacts with FMR1, FXR1, FXR2, EWSR1, FUS, SERBP1, EEF1A1 and DDX3X or DDX3Y, and with the small nuclear ribonucleoprotein-associated proteins SNRPB and SNRPN. Interacts with 'Lys-48'-linked tetra-ubiquitin, but not with monoubiquitin or 'Lys-63'-linked ubiquitin chains. May interact with the exon junction complex (EJC) composed at least of CASC3, EIF4A3, MAGOH and RBM8A. Interacts with POLR2A (via the C-terminal domain (CTD)).

It is found in the cytoplasm. It localises to the nucleus. In terms of biological role, scaffolding protein that specifically recognizes and binds dimethylarginine-containing proteins. Plays a role in the regulation of translation of target mRNAs by binding Arg/Gly-rich motifs (GAR) in dimethylarginine-containing proteins. In nucleus, acts as a coactivator: recognizes and binds asymmetric dimethylation on the core histone tails associated with transcriptional activation (H3R17me2a and H4R3me2a) and recruits proteins at these arginine-methylated loci. In cytoplasm, acts as an antiviral factor that participates in the assembly of stress granules together with G3BP1. This chain is Tudor domain-containing protein 3 (Tdrd3), found in Mus musculus (Mouse).